The primary structure comprises 282 residues: Protoheme IX farnesyltransferase (282 aa).

9 helical membrane-spanning segments follow: residues 9-29 (LAKP…FLLA), 39-59 (LPLF…GCVF), 79-99 (LVTG…LLIL), 102-122 (LVLY…GFIV), 139-159 (VLGG…VVNI), 165-185 (LALF…IAML), 210-230 (IMLF…VLGS), 231-251 (ADLF…YKSI), and 261-281 (VFAK…CLTM).

This sequence belongs to the UbiA prenyltransferase family. Protoheme IX farnesyltransferase subfamily.

It localises to the cell inner membrane. It catalyses the reaction heme b + (2E,6E)-farnesyl diphosphate + H2O = Fe(II)-heme o + diphosphate. It functions in the pathway porphyrin-containing compound metabolism; heme O biosynthesis; heme O from protoheme: step 1/1. Functionally, converts heme B (protoheme IX) to heme O by substitution of the vinyl group on carbon 2 of heme B porphyrin ring with a hydroxyethyl farnesyl side group. This Francisella tularensis subsp. novicida (strain U112) protein is Protoheme IX farnesyltransferase.